The primary structure comprises 247 residues: Carboxy-S-adenosyl-L-methionine synthase (247 aa).

Residues tyrosine 39, 64–66, 89–90, 117–118, asparagine 132, and arginine 199 each bind S-adenosyl-L-methionine; these read GCS, DN, and DI.

The protein belongs to the class I-like SAM-binding methyltransferase superfamily. Cx-SAM synthase family. Homodimer.

It catalyses the reaction prephenate + S-adenosyl-L-methionine = carboxy-S-adenosyl-L-methionine + 3-phenylpyruvate + H2O. Functionally, catalyzes the conversion of S-adenosyl-L-methionine (SAM) to carboxy-S-adenosyl-L-methionine (Cx-SAM). This is Carboxy-S-adenosyl-L-methionine synthase from Salmonella choleraesuis (strain SC-B67).